Consider the following 262-residue polypeptide: Dehydrin COR410 (262 aa).

2 disordered regions span residues 1 to 153 (MEDE…HDTD) and 187 to 262 (LPGG…KPSA). Basic and acidic residues-rich tracts occupy residues 34-45 (KKAEEDKEKEEE) and 53-74 (VSVE…KETL). Acidic residues predominate over residues 89–101 (SDEEEEEVIDDNG). 2 consecutive repeat copies span residues 106-126 (RKKK…HKDT) and 173-193 (EEEK…GHKK). The 3 X 21 AA repeats, Lys-rich stretch occupies residues 106-245 (RKKKKGLKEK…MDKLPGYHKT (140 aa)). 2 stretches are compositionally biased toward basic and acidic residues: residues 113–130 (KEKL…EGEH) and 187–196 (LPGGHKKPED). A compositionally biased stretch (low complexity) spans 197–209 (AAAVPVTHAAPAP). The stretch at 225–245 (AKEKKGLLGKIMDKLPGYHKT) is repeat 3. Over residues 244 to 262 (KTGEEDKAAAATGEHKPSA) the composition is skewed to basic and acidic residues.

In terms of tissue distribution, expressed in roots, crown and leaves during cold acclimation.

The sequence is that of Dehydrin COR410 (COR410) from Triticum aestivum (Wheat).